Reading from the N-terminus, the 311-residue chain is DNA-directed RNA polymerase subunit alpha (311 aa).

Positions 1-227 (MNNISIKCLK…DLFTLLINNK (227 aa)) are alpha N-terminal domain (alpha-NTD). The tract at residues 242–311 (ISIEPYTNIA…LKNKLGIILK (70 aa)) is alpha C-terminal domain (alpha-CTD).

This sequence belongs to the RNA polymerase alpha chain family. As to quaternary structure, in plastids the minimal PEP RNA polymerase catalytic core is composed of four subunits: alpha, beta, beta', and beta''. When a (nuclear-encoded) sigma factor is associated with the core the holoenzyme is formed, which can initiate transcription.

Its subcellular location is the plastid. It localises to the chloroplast. It carries out the reaction RNA(n) + a ribonucleoside 5'-triphosphate = RNA(n+1) + diphosphate. DNA-dependent RNA polymerase catalyzes the transcription of DNA into RNA using the four ribonucleoside triphosphates as substrates. In Phaeodactylum tricornutum (strain CCAP 1055/1), this protein is DNA-directed RNA polymerase subunit alpha.